The following is a 262-amino-acid chain: Acyl-[acyl-carrier-protein]--UDP-N-acetylglucosamine O-acyltransferase (262 aa).

The protein belongs to the transferase hexapeptide repeat family. LpxA subfamily. Homotrimer.

The protein resides in the cytoplasm. It carries out the reaction a (3R)-hydroxyacyl-[ACP] + UDP-N-acetyl-alpha-D-glucosamine = a UDP-3-O-[(3R)-3-hydroxyacyl]-N-acetyl-alpha-D-glucosamine + holo-[ACP]. It functions in the pathway glycolipid biosynthesis; lipid IV(A) biosynthesis; lipid IV(A) from (3R)-3-hydroxytetradecanoyl-[acyl-carrier-protein] and UDP-N-acetyl-alpha-D-glucosamine: step 1/6. Involved in the biosynthesis of lipid A, a phosphorylated glycolipid that anchors the lipopolysaccharide to the outer membrane of the cell. The chain is Acyl-[acyl-carrier-protein]--UDP-N-acetylglucosamine O-acyltransferase from Verminephrobacter eiseniae (strain EF01-2).